The following is a 357-amino-acid chain: UPF0283 membrane protein HS_0596 (357 aa).

3 helical membrane passes run 67-87 (LMATICLFSCGILAQSVQWLV), 96-116 (IAFVFAMVSLFLVLLGLGAII), and 213-233 (AVESALIVAVSPLAIVDMFFI).

It belongs to the UPF0283 family.

Its subcellular location is the cell inner membrane. The chain is UPF0283 membrane protein HS_0596 from Histophilus somni (strain 129Pt) (Haemophilus somnus).